The following is a 533-amino-acid chain: Decreased expression in renal and prostate cancer protein (533 aa).

A compositionally biased stretch (basic and acidic residues) spans 1–12; that stretch reads MKEPRIFPRERP. Disordered regions lie at residues 1 to 31, 67 to 164, 177 to 259, and 299 to 350; these read MKEP…GGPV, QNPS…PDPR, MRAG…RAGG, and ASGN…PNSA. Serine 160 is subject to Phosphoserine. Polar residues predominate over residues 299–309; the sequence is ASGNMGTNPPT. Arginine 368 carries the asymmetric dimethylarginine modification. At arginine 396 the chain carries Omega-N-methylarginine. A Phosphoserine modification is found at serine 432.

This sequence belongs to the DERPC family.

The protein localises to the nucleus. Its function is as follows. Potential tumor suppressor. This Mus musculus (Mouse) protein is Decreased expression in renal and prostate cancer protein.